Consider the following 200-residue polypeptide: Holliday junction branch migration complex subunit RuvA (200 aa).

A domain I region spans residues 1–64 (MFTYFRGELI…EDLMQLFGFL (64 aa)). The domain II stretch occupies residues 65 to 143 (EEEERQLFRL…KLRPSGGTKS (79 aa)). A flexible linker region spans residues 144-148 (VSRLS). Positions 148 to 200 (SESSMRDDAVNALVTLGFLRSVAQKAVTESLTSLRNPQVEDLVRDALLTIRTP) are domain III.

It belongs to the RuvA family. As to quaternary structure, homotetramer. Forms an RuvA(8)-RuvB(12)-Holliday junction (HJ) complex. HJ DNA is sandwiched between 2 RuvA tetramers; dsDNA enters through RuvA and exits via RuvB. An RuvB hexamer assembles on each DNA strand where it exits the tetramer. Each RuvB hexamer is contacted by two RuvA subunits (via domain III) on 2 adjacent RuvB subunits; this complex drives branch migration. In the full resolvosome a probable DNA-RuvA(4)-RuvB(12)-RuvC(2) complex forms which resolves the HJ.

The protein localises to the cytoplasm. The RuvA-RuvB-RuvC complex processes Holliday junction (HJ) DNA during genetic recombination and DNA repair, while the RuvA-RuvB complex plays an important role in the rescue of blocked DNA replication forks via replication fork reversal (RFR). RuvA specifically binds to HJ cruciform DNA, conferring on it an open structure. The RuvB hexamer acts as an ATP-dependent pump, pulling dsDNA into and through the RuvAB complex. HJ branch migration allows RuvC to scan DNA until it finds its consensus sequence, where it cleaves and resolves the cruciform DNA. In Chlorobium phaeobacteroides (strain BS1), this protein is Holliday junction branch migration complex subunit RuvA.